Here is a 124-residue protein sequence, read N- to C-terminus: Large ribosomal subunit protein bL20 (124 aa).

It belongs to the bacterial ribosomal protein bL20 family.

In terms of biological role, binds directly to 23S ribosomal RNA and is necessary for the in vitro assembly process of the 50S ribosomal subunit. It is not involved in the protein synthesizing functions of that subunit. This chain is Large ribosomal subunit protein bL20, found in Gemmatimonas aurantiaca (strain DSM 14586 / JCM 11422 / NBRC 100505 / T-27).